The sequence spans 136 residues: Small ribosomal subunit protein uS19 (136 aa).

The disordered stretch occupies residues 117-136; the sequence is VQHGDPGMGATRSSMFVPLK.

Belongs to the universal ribosomal protein uS19 family.

Functionally, protein S19 forms a complex with S13 that binds strongly to the 16S ribosomal RNA. This Methanobrevibacter smithii (strain ATCC 35061 / DSM 861 / OCM 144 / PS) protein is Small ribosomal subunit protein uS19.